A 412-amino-acid chain; its full sequence is Exodeoxyribonuclease 7 large subunit (412 aa).

It belongs to the XseA family. Heterooligomer composed of large and small subunits.

It localises to the cytoplasm. It catalyses the reaction Exonucleolytic cleavage in either 5'- to 3'- or 3'- to 5'-direction to yield nucleoside 5'-phosphates.. In terms of biological role, bidirectionally degrades single-stranded DNA into large acid-insoluble oligonucleotides, which are then degraded further into small acid-soluble oligonucleotides. This Nostoc sp. (strain PCC 7120 / SAG 25.82 / UTEX 2576) protein is Exodeoxyribonuclease 7 large subunit.